Reading from the N-terminus, the 212-residue chain is Pyridoxine/pyridoxamine 5'-phosphate oxidase (212 aa).

Substrate-binding positions include 7–10 (RRQY) and lysine 65. FMN-binding positions include 60-65 (RIVLLK), 75-76 (FT), arginine 81, lysine 82, and glutamine 104. The substrate site is built by tyrosine 122, arginine 126, and serine 130. FMN is bound by residues 139 to 140 (QS) and tryptophan 184. 190–192 (RLH) is a binding site for substrate. Residue arginine 194 coordinates FMN.

The protein belongs to the pyridoxamine 5'-phosphate oxidase family. Homodimer. FMN serves as cofactor.

It carries out the reaction pyridoxamine 5'-phosphate + O2 + H2O = pyridoxal 5'-phosphate + H2O2 + NH4(+). The enzyme catalyses pyridoxine 5'-phosphate + O2 = pyridoxal 5'-phosphate + H2O2. Its pathway is cofactor metabolism; pyridoxal 5'-phosphate salvage; pyridoxal 5'-phosphate from pyridoxamine 5'-phosphate: step 1/1. It functions in the pathway cofactor metabolism; pyridoxal 5'-phosphate salvage; pyridoxal 5'-phosphate from pyridoxine 5'-phosphate: step 1/1. Its function is as follows. Catalyzes the oxidation of either pyridoxine 5'-phosphate (PNP) or pyridoxamine 5'-phosphate (PMP) into pyridoxal 5'-phosphate (PLP). The sequence is that of Pyridoxine/pyridoxamine 5'-phosphate oxidase from Alteromonas mediterranea (strain DSM 17117 / CIP 110805 / LMG 28347 / Deep ecotype).